The following is a 320-amino-acid chain: Aspartate carbamoyltransferase catalytic subunit (320 aa).

Positions 53 and 54 each coordinate carbamoyl phosphate. Residue Lys-82 coordinates L-aspartate. Carbamoyl phosphate-binding residues include Arg-103, His-131, and Gln-134. Arg-164 and Arg-227 together coordinate L-aspartate. Residues Leu-266 and Pro-267 each coordinate carbamoyl phosphate.

This sequence belongs to the aspartate/ornithine carbamoyltransferase superfamily. ATCase family. In terms of assembly, heterododecamer (2C3:3R2) of six catalytic PyrB chains organized as two trimers (C3), and six regulatory PyrI chains organized as three dimers (R2).

It carries out the reaction carbamoyl phosphate + L-aspartate = N-carbamoyl-L-aspartate + phosphate + H(+). It participates in pyrimidine metabolism; UMP biosynthesis via de novo pathway; (S)-dihydroorotate from bicarbonate: step 2/3. Functionally, catalyzes the condensation of carbamoyl phosphate and aspartate to form carbamoyl aspartate and inorganic phosphate, the committed step in the de novo pyrimidine nucleotide biosynthesis pathway. This is Aspartate carbamoyltransferase catalytic subunit from Bifidobacterium longum subsp. infantis (strain ATCC 15697 / DSM 20088 / JCM 1222 / NCTC 11817 / S12).